Here is a 552-residue protein sequence, read N- to C-terminus: Solute carrier family 22 member 6-B (552 aa).

Over 1-16 (MAFQEILESLGGMGRY) the chain is Cytoplasmic. The chain crosses the membrane as a helical span at residues 17–37 (QVIHVVLLSLPVFMLASHNLM). Residues 38–137 (QNFTAATPSH…LVCNHRRMRQ (100 aa)) are Extracellular-facing. A helical membrane pass occupies residues 138–158 (VAQSIYMAGVLVGSILFGGLS). Residues 159–164 (DKFGRR) lie on the Cytoplasmic side of the membrane. Residues 165-184 (PLNIWSNLQMFVTGICAAFS) form a helical membrane-spanning segment. Residue Pro-185 is a topological domain, extracellular. A helical membrane pass occupies residues 186–206 (NYIWYCIFRFLTGVAFSGIVL). Topologically, residues 207-225 (NSYSLTVEWIPTGNRAFTS) are cytoplasmic. Residues 226-246 (TATGYCYTMGQLVLVGLAFII) traverse the membrane as a helical segment. Topologically, residues 247–250 (RDWQ) are extracellular. The helical transmembrane segment at 251–271 (WLQLAASIPFFFYFLYSWWIP) threads the bilayer. Over 272–336 (ESGRWLVLSG…YSALDLVRTP (65 aa)) the chain is Cytoplasmic. Residues 337–356 (VVRRISFCISCTWFSTSFAY) traverse the membrane as a helical segment. A topological domain (extracellular) is located at residue Tyr-357. The helical transmembrane segment at 358-378 (GLALDLQSFGVSIYIIQIIFG) threads the bilayer. Residues 379 to 398 (TVDIPAKFISYFITTYVGRR) lie on the Cytoplasmic side of the membrane. Residues 399–419 (VSQAITLILAGIAILVNISVP) form a helical membrane-spanning segment. Residues 420-426 (QDFQTVR) are Extracellular-facing. The chain crosses the membrane as a helical span at residues 427–447 (TAMAVFGKGCLAASFNCLYLY). The Cytoplasmic segment spans residues 448–459 (TGELYPTVIRQT). A helical transmembrane segment spans residues 460–480 (GMGLGAMMARLGGIIAPLAQM). At 481 to 487 (TGDIYHS) the chain is on the extracellular side. The chain crosses the membrane as a helical span at residues 488 to 508 (LPLIIFGCLPILSGIAGCFLP). Topologically, residues 509-552 (ETLGVPLPETIEEVESPDKQQKDVNVSAKIPLKETELYNMKTDV) are cytoplasmic.

The protein belongs to the major facilitator (TC 2.A.1) superfamily. Organic cation transporter (TC 2.A.1.19) family. In terms of processing, glycosylated. Glycosylation is necessary for proper targeting of the transporter to the plasma membrane.

It localises to the cell membrane. Its subcellular location is the basolateral cell membrane. The protein localises to the basal cell membrane. In terms of biological role, involved in the renal elimination of endogenous and exogenous organic anions. Mediates the sodium-independent uptake of p-aminohippurate (PAH), cidofovir, adefovir, 9-(2-phosphonylmethoxyethyl) guanine (PMEG), 9-(2-phosphonylmethoxyethyl) diaminopurine (PMEDAP) and edaravone sulfate. PAH uptake is inhibited by furosemide, steviol, phorbol 12-myristate 13-acetate (PMA), calcium ionophore A23187, benzylpenicillin, furosemide, indomethacin, bumetamide, losartan, probenecid, phenol red, urate, and alpha-ketoglutarate. The protein is Solute carrier family 22 member 6-B (slc22a6-b) of Xenopus laevis (African clawed frog).